The primary structure comprises 436 residues: Transcriptional regulator VdtR (436 aa).

A DNA-binding region (zn(2)-C6 fungal-type) is located at residues 17–44 (CDRCSANKVKCTQEKPECERCRLLSLPC). 2 disordered regions span residues 51-147 (RIGK…HDKG) and 173-192 (TAREDQKQHPELRSEEEYSD). Residues 125–141 (SHNSNRPTNMASTNQDQ) are compositionally biased toward polar residues. The segment covering 174 to 192 (AREDQKQHPELRSEEEYSD) has biased composition (basic and acidic residues).

It is found in the nucleus. Transcription factor that regulates expression of the viriditoxin biosynthesis cluster and viriditoxin synthesis. The protein is Transcriptional regulator VdtR of Byssochlamys spectabilis (Paecilomyces variotii).